A 607-amino-acid polypeptide reads, in one-letter code: DNA mismatch repair protein MutL (607 aa).

Positions 374 to 411 (RTEAGNEHVPSANRIQPPDPSIDMPDEPVPEQTDEPVA) are disordered. The span at 397 to 407 (MPDEPVPEQTD) shows a compositional bias: acidic residues.

The protein belongs to the DNA mismatch repair MutL/HexB family.

In terms of biological role, this protein is involved in the repair of mismatches in DNA. It is required for dam-dependent methyl-directed DNA mismatch repair. May act as a 'molecular matchmaker', a protein that promotes the formation of a stable complex between two or more DNA-binding proteins in an ATP-dependent manner without itself being part of a final effector complex. This chain is DNA mismatch repair protein MutL, found in Exiguobacterium sibiricum (strain DSM 17290 / CCUG 55495 / CIP 109462 / JCM 13490 / 255-15).